We begin with the raw amino-acid sequence, 972 residues long: Structural polyprotein (972 aa).

Aspartate 26 is an a divalent metal cation binding site. The 226-residue stretch at 509 to 734 folds into the Peptidase S50 domain; it reads SGGPDGKFSR…YLGELMASNA (226 aa). The Nucleophile role is filled by serine 633. Lysine 674 is a catalytic residue. Disordered stretches follow at residues 794–817 and 916–972; these read KLIS…AQEA and NGGR…NAEV. The segment covering 801 to 817 has biased composition (basic and acidic residues); it reads KHPEKPKGPDQHHAQEA. Over residues 963–972 the composition is skewed to polar residues; it reads FTPSGDNAEV.

Homotrimer. A central divalent metal (possibly cobalt) stabilizes the VP2 trimer. In terms of assembly, homodimer. interacts (via C-terminus) with VP1 in the cytoplasm. Interacts with VP2. Post-translationally, specific enzymatic cleavages yield mature proteins. The capsid assembly seems to be regulated by polyprotein processing. The protease VP4 cleaves itself off the polyprotein, thus releasing pre-VP2 and VP3 within the infected cell. During capsid assembly, the C-terminus of pre-VP2 is further processed by VP4, giving rise to VP2, the external capsid protein and three small peptides that all stay closely associated with the capsid.

Its subcellular location is the virion. The protein resides in the host cytoplasm. Functionally, capsid protein VP2 self assembles to form an icosahedral capsid with a T=13 symmetry, about 70 nm in diameter, and consisting of 260 VP2 trimers. The capsid encapsulates the genomic dsRNA. VP2 is also involved in attachment and entry into the host cell. The precursor of VP2 plays an important role in capsid assembly. First, pre-VP2 and VP2 oligomers assemble to form a procapsid. Then, the pre-VP2 intermediates may be processed into VP2 proteins by proteolytic cleavage mediated by VP4 to obtain the mature virion. The final capsid is composed of pentamers and hexamers but VP2 has a natural tendency to assemble into all-pentameric structures. Therefore pre-VP2 may be required to allow formation of the hexameric structures. Its function is as follows. Protease VP4 is a serine protease that cleaves the polyprotein into its final products. Pre-VP2 is first partially cleaved, and may be completely processed by VP4 upon capsid maturation. In terms of biological role, capsid protein VP3 plays a key role in virion assembly by providing a scaffold for the capsid made of VP2. May self-assemble to form a T=4-like icosahedral inner-capsid composed of at least 180 trimers. Plays a role in genomic RNA packaging by recruiting VP1 into the capsid and interacting with the dsRNA genome segments to form a ribonucleoprotein complex. Additionally, the interaction of the VP3 C-terminal tail with VP1 removes the inherent structural blockade of the polymerase active site. Thus, VP3 can also function as a transcriptional activator. Functionally, structural peptide 1 is a small peptide derived from pre-VP2 C-terminus. It destabilizes and perforates cell membranes, suggesting a role during entry. Structural peptide 2 is a small peptide derived from pVP2 C-terminus. It is not essential for the virus viability, but viral growth is affected when missing. Its function is as follows. Structural peptide 3 is a small peptide derived from pVP2 C-terminus. It is not essential for the virus viability, but viral growth is affected when missing. This is Structural polyprotein from Infectious pancreatic necrosis virus (strain Sp) (IPNV).